A 267-amino-acid polypeptide reads, in one-letter code: Translation initiation factor 2 subunit alpha (267 aa).

Positions 17–88 constitute an S1 motif domain; sequence GEIVIGTVKR…KRGHIDLSIK (72 aa).

The protein belongs to the eIF-2-alpha family. Heterotrimer composed of an alpha, a beta and a gamma chain.

EIF-2 functions in the early steps of protein synthesis by forming a ternary complex with GTP and initiator tRNA. This chain is Translation initiation factor 2 subunit alpha (eif2a), found in Archaeoglobus fulgidus (strain ATCC 49558 / DSM 4304 / JCM 9628 / NBRC 100126 / VC-16).